Consider the following 285-residue polypeptide: Bifunctional protein FolD (285 aa).

NADP(+) contacts are provided by residues 165-167 (GRS), S190, and I231.

This sequence belongs to the tetrahydrofolate dehydrogenase/cyclohydrolase family. In terms of assembly, homodimer.

The enzyme catalyses (6R)-5,10-methylene-5,6,7,8-tetrahydrofolate + NADP(+) = (6R)-5,10-methenyltetrahydrofolate + NADPH. The catalysed reaction is (6R)-5,10-methenyltetrahydrofolate + H2O = (6R)-10-formyltetrahydrofolate + H(+). The protein operates within one-carbon metabolism; tetrahydrofolate interconversion. Its function is as follows. Catalyzes the oxidation of 5,10-methylenetetrahydrofolate to 5,10-methenyltetrahydrofolate and then the hydrolysis of 5,10-methenyltetrahydrofolate to 10-formyltetrahydrofolate. This Alkaliphilus oremlandii (strain OhILAs) (Clostridium oremlandii (strain OhILAs)) protein is Bifunctional protein FolD.